The sequence spans 247 residues: Phosphoribosylaminoimidazole-succinocarboxamide synthase (247 aa).

Belongs to the SAICAR synthetase family.

It carries out the reaction 5-amino-1-(5-phospho-D-ribosyl)imidazole-4-carboxylate + L-aspartate + ATP = (2S)-2-[5-amino-1-(5-phospho-beta-D-ribosyl)imidazole-4-carboxamido]succinate + ADP + phosphate + 2 H(+). It functions in the pathway purine metabolism; IMP biosynthesis via de novo pathway; 5-amino-1-(5-phospho-D-ribosyl)imidazole-4-carboxamide from 5-amino-1-(5-phospho-D-ribosyl)imidazole-4-carboxylate: step 1/2. The protein is Phosphoribosylaminoimidazole-succinocarboxamide synthase of Gloeobacter violaceus (strain ATCC 29082 / PCC 7421).